A 342-amino-acid chain; its full sequence is Dihydroorotase (342 aa).

Residues H13 and H15 each coordinate Zn(2+). Substrate-binding positions include 15-17 (HLR) and N41. The Zn(2+) site is built by K98, H135, and H173. The residue at position 98 (K98) is an N6-carboxylysine. Position 135 (H135) interacts with substrate. Position 218 (L218) interacts with substrate. D246 is a binding site for Zn(2+). D246 is an active-site residue. Substrate is bound by residues H250 and A262.

The protein belongs to the metallo-dependent hydrolases superfamily. DHOase family. Class II DHOase subfamily. As to quaternary structure, homodimer. Zn(2+) is required as a cofactor.

It catalyses the reaction (S)-dihydroorotate + H2O = N-carbamoyl-L-aspartate + H(+). It functions in the pathway pyrimidine metabolism; UMP biosynthesis via de novo pathway; (S)-dihydroorotate from bicarbonate: step 3/3. Functionally, catalyzes the reversible cyclization of carbamoyl aspartate to dihydroorotate. This is Dihydroorotase from Vibrio atlanticus (strain LGP32) (Vibrio splendidus (strain Mel32)).